Here is a 1042-residue protein sequence, read N- to C-terminus: Sarcoplasmic/endoplasmic reticulum calcium ATPase 2 (1042 aa).

The Cytoplasmic segment spans residues 1-48 (MENAHTKTVEEVLGHFGVNESTGLSLEQVKKLKERWGSNELPAEEGKT). Ser38 carries the post-translational modification Phosphoserine. Residues 49 to 69 (LLELVIEQFEDLLVRILLLAA) form a helical membrane-spanning segment. Over 70-89 (CISFVLAWFEEGEETITAFV) the chain is Lumenal. A helical membrane pass occupies residues 90–110 (EPFVILLILVANAIVGVWQER). At 111–253 (NAENAIEALK…QERTPLQQKL (143 aa)) the chain is on the cytoplasmic side. Residues 254–273 (DEFGEQLSKVISLICIAVWI) form a helical membrane-spanning segment. The Lumenal portion of the chain corresponds to 274 to 295 (INIGHFNDPVHGGSWIRGAIYY). 3'-nitrotyrosine occurs at positions 294 and 295. A helical transmembrane segment spans residues 296 to 313 (FKIAVALAVAAIPEGLPA). Residues Val304, Ala305, Ile307, and Glu309 each contribute to the Ca(2+) site. At 314–756 (VITTCLALGT…EEGRAIYNNM (443 aa)) the chain is on the cytoplasmic side. The 4-aspartylphosphate intermediate role is filled by Asp351. Mg(2+) is bound by residues Asp351 and Thr353. Position 353 (Thr353) interacts with ATP. The residue at position 441 (Thr441) is a Phosphothreonine. The ATP site is built by Glu442, Arg489, and Lys514. At Ser531 the chain carries Phosphoserine. Position 559 (Arg559) interacts with ATP. The interval 575–594 (MNLEDSANFIKYETNLTFVG) is interaction with HAX1. The residue at position 580 (Ser580) is a Phosphoserine. ATP is bound by residues Thr624, Gly625, and Asp626. Ser663 is subject to Phosphoserine. Positions 677 and 683 each coordinate ATP. Residue Asp702 participates in Mg(2+) binding. An ATP-binding site is contributed by Asn705. The helical transmembrane segment at 757-776 (KQFIRYLISSNVGEVVCIFL) threads the bilayer. Asn767 and Glu770 together coordinate Ca(2+). At 777-786 (TAALGFPEAL) the chain is on the lumenal side. The helical transmembrane segment at 787–807 (IPVQLLWVNLVTDGLPATALG) threads the bilayer. Residues 787-807 (IPVQLLWVNLVTDGLPATALG) are interaction with PLN. The interaction with TMEM64 and PDIA3 stretch occupies residues 788–1042 (PVQLLWVNLV…DTNFSDMFWS (255 aa)). Positions 795, 798, and 799 each coordinate Ca(2+). The Cytoplasmic portion of the chain corresponds to 808-827 (FNPPDLDIMNKPPRNPKEPL). The chain crosses the membrane as a helical span at residues 828 to 850 (ISGWLFFRYLAIGCYVGAATVGA). Topologically, residues 851 to 896 (AAWWFIAADGGPRVTFYQLSHFLQCKEDNPDFEGVDCAVFESPYPM) are lumenal. Cys875 and Cys887 are disulfide-bonded. The helical transmembrane segment at 897-916 (TMALSVLVTIEMCNALNSLS) threads the bilayer. Glu907 is a Ca(2+) binding site. Over 917 to 929 (ENQSLLRMPPWEN) the chain is Cytoplasmic. A helical membrane pass occupies residues 930–948 (IWLVGSICLSMSLHFLILY). Positions 931-942 (WLVGSICLSMSL) are interaction with PLN. The Lumenal portion of the chain corresponds to 949–963 (VEPLPLIFQITPLNL). Residues 964–984 (TQWLMVLKISLPVILMDETLK) traverse the membrane as a helical segment. Over 985 to 1042 (FVARNYLEPGKECVQPATKSCSFSACTDGISWPFVLLIMPLVIWVYSTDTNFSDMFWS) the chain is Cytoplasmic.

It belongs to the cation transport ATPase (P-type) (TC 3.A.3) family. Type IIA subfamily. Interacts with sarcolipin (SLN); the interaction inhibits ATP2A2 Ca(2+) affinity. Interacts with phospholamban (PLN); the interaction inhibits ATP2A2 Ca(2+) affinity. Interacts with myoregulin (MRLN). Interacts with ARLN and ERLN; the interactions inhibit ATP2A2 Ca(2+) affinity. Interacts with STRIT1/DWORF; the interaction results in activation of ATP2A2. Interacts with the monomeric forms of SLN, PLN, ARLN, ERLN and STRI1/DWORF. Interacts with HAX1. Interacts with S100A8 and S100A9. Interacts with SLC35G1 and STIM1. Interacts with TMEM203. Interacts with TMEM64 and PDIA3. Interacts with TMX1. Interacts with TMX2. Interacts with VMP1; VMP1 competes with PLN and SLN to prevent them from forming an inhibitory complex with ATP2A2. Interacts with ULK1. Interacts with S100A1 in a Ca(2+)-dependent manner. Interacts with TUNAR. Interacts with FLVCR2; this interaction occurs in the absence of heme and promotes ATP2A2 proteasomal degradation; this complex is dissociated upon heme binding. Interacts with FNIP1. In terms of assembly, interacts with TRAM2 (via C-terminus). Mg(2+) is required as a cofactor. Nitrated under oxidative stress. Nitration on the two tyrosine residues inhibits catalytic activity. In terms of processing, serotonylated on Gln residues by TGM2 in response to hypoxia, leading to its inactivation. As to expression, detected in heart left ventricle (at protein level). Isoform 2 is highly expressed in heart and slow twitch skeletal muscle. Isoform 1 is widely expressed.

The protein localises to the endoplasmic reticulum membrane. Its subcellular location is the sarcoplasmic reticulum membrane. The enzyme catalyses Ca(2+)(in) + ATP + H2O = Ca(2+)(out) + ADP + phosphate + H(+). With respect to regulation, has different conformational states with differential Ca2+ affinity. The E1 conformational state (active form) shows high Ca(2+) affinity, while the E2 state exhibits low Ca(2+) affinity. Binding of ATP allosterically increases its affinity for subsequent binding of Ca2+. Reversibly inhibited by phospholamban (PLN) at low calcium concentrations. PLN inhibits ATP2A2 Ca(2+) affinity by disrupting its allosteric activation by ATP. Inhibited by sarcolipin (SLN) and myoregulin (MRLN). The inhibition is blocked by VMP1. Enhanced by STRIT1/DWORF; STRIT1 increases activity by displacing sarcolipin (SLN), phospholamban (PLN) and myoregulin (MRLN). Stabilizes SERCA2 in its E2 state. Functionally, this magnesium-dependent enzyme catalyzes the hydrolysis of ATP coupled with the translocation of calcium from the cytosol to the sarcoplasmic reticulum lumen. Involved in autophagy in response to starvation. Upon interaction with VMP1 and activation, controls ER-isolation membrane contacts for autophagosome formation. Also modulates ER contacts with lipid droplets, mitochondria and endosomes. In coordination with FLVCR2 mediates heme-stimulated switching from mitochondrial ATP synthesis to thermogenesis. In terms of biological role, involved in the regulation of the contraction/relaxation cycle. Acts as a regulator of TNFSF11-mediated Ca(2+) signaling pathways via its interaction with TMEM64 which is critical for the TNFSF11-induced CREB1 activation and mitochondrial ROS generation necessary for proper osteoclast generation. Association between TMEM64 and SERCA2 in the ER leads to cytosolic Ca(2+) spiking for activation of NFATC1 and production of mitochondrial ROS, thereby triggering Ca(2+) signaling cascades that promote osteoclast differentiation and activation. This Sus scrofa (Pig) protein is Sarcoplasmic/endoplasmic reticulum calcium ATPase 2 (ATP2A2).